A 682-amino-acid polypeptide reads, in one-letter code: DNA-directed RNA polymerase subunit beta' (682 aa).

Zn(2+) contacts are provided by Cys-69, Cys-71, Cys-87, and Cys-90. Mg(2+) is bound by residues Asp-489, Asp-491, and Asp-493.

The protein belongs to the RNA polymerase beta' chain family. RpoC1 subfamily. In terms of assembly, in plastids the minimal PEP RNA polymerase catalytic core is composed of four subunits: alpha, beta, beta', and beta''. When a (nuclear-encoded) sigma factor is associated with the core the holoenzyme is formed, which can initiate transcription. Requires Mg(2+) as cofactor. Zn(2+) is required as a cofactor.

The protein resides in the plastid. Its subcellular location is the chloroplast. It carries out the reaction RNA(n) + a ribonucleoside 5'-triphosphate = RNA(n+1) + diphosphate. In terms of biological role, DNA-dependent RNA polymerase catalyzes the transcription of DNA into RNA using the four ribonucleoside triphosphates as substrates. This Brachypodium distachyon (Purple false brome) protein is DNA-directed RNA polymerase subunit beta'.